Consider the following 4621-residue polypeptide: Dynein axonemal heavy chain 5 (4621 aa).

The interval 1-1938 (MFRIGRRQLW…MIHITDVAFI (1938 aa)) is stem. 2 coiled-coil regions span residues 260-305 (WIKQ…DQLK) and 803-825 (LENA…DLIE). Residues 901-921 (VCHENASPSGNTSGRREGHSE) are disordered. 2 coiled-coil regions span residues 1065 to 1094 (AVKN…SINL) and 1433 to 1462 (DVNI…DWQA). 4 AAA regions span residues 1939-2161 (YQNE…VLRT), 2221-2440 (TAIS…IQNL), 2547-2800 (VYPP…IWQG), and 2913-3167 (LYNE…FRRS). Residues 1977 to 1984 (GPAGTGKT) and 2259 to 2266 (GPSGSGKT) each bind ATP. The segment at 3182–3479 (YKFIYEEKHM…QTLLEDADRC (298 aa)) is stalk. 3 coiled-coil regions span residues 3186–3299 (YEEK…QTIK), 3423–3490 (LKAN…STLI), and 3729–3814 (ILTE…EEYR). AAA stretches follow at residues 3564 to 3794 (LIDA…EVTQ) and 4009 to 4223 (ARKY…FIQN). Residues 4389–4417 (FLRQEIDRMQRVLSLVRSTLTELKLAVDG) are a coiled coil.

Belongs to the dynein heavy chain family. In terms of assembly, interacts with DNAL1. Consists of at least two heavy chains and a number of intermediate and light chains. Strongly expressed in lung and kidney and weaker expression seen in brain, heart and testis. In the brain, expressed in ependymal cells lining the brain ventricles and the aqueduct.

The protein resides in the cytoplasm. The protein localises to the cytoskeleton. It is found in the cilium axoneme. Force generating protein of respiratory cilia. Produces force towards the minus ends of microtubules. Dynein has ATPase activity; the force-producing power stroke is thought to occur on release of ADP. Required for structural and functional integrity of the cilia of ependymal cells lining the brain ventricles. This Mus musculus (Mouse) protein is Dynein axonemal heavy chain 5.